Consider the following 249-residue polypeptide: MEYSDQALILAVKRFREIDAWVRLLSPTRGVYTAFAFGGLKSRRRFLGCLDPLNHVQFKVRRSGYRGYHCLAEGKLLDAPRQLRSHPQRLGMAVNCLKFFEAAPVAPGSFAQAYGLMRAMLSTLDAADEPSPLFPLLFRARMTFLHGMLPACGQCAVCGQPLGHDGAVCHVEEGRVACPDCRAAASGGVHARLGGEALALLASAVEQGPEQWAACRPHPAAGREFSRAVDLLVRYHMGLAWEQGGFVRA.

Belongs to the RecO family.

Its function is as follows. Involved in DNA repair and RecF pathway recombination. This Solidesulfovibrio magneticus (strain ATCC 700980 / DSM 13731 / RS-1) (Desulfovibrio magneticus) protein is DNA repair protein RecO.